A 371-amino-acid polypeptide reads, in one-letter code: 3-isopropylmalate dehydrogenase B (371 aa).

79 to 93 (GSKVDHIRRGLDGPE) is an NAD(+) binding site. Residues R100, R110, R142, and D229 each contribute to the substrate site. Mg(2+)-binding residues include D229, D254, and D258. Residue 296 to 308 (GSAPTIAGKNIAN) participates in NAD(+) binding.

This sequence belongs to the isocitrate and isopropylmalate dehydrogenases family. In terms of assembly, homodimer. Mg(2+) is required as a cofactor. It depends on Mn(2+) as a cofactor.

It localises to the cytoplasm. The enzyme catalyses (2R,3S)-3-isopropylmalate + NAD(+) = 4-methyl-2-oxopentanoate + CO2 + NADH. The protein operates within amino-acid biosynthesis; L-leucine biosynthesis; L-leucine from 3-methyl-2-oxobutanoate: step 3/4. Its function is as follows. Catalyzes the oxidation of 3-carboxy-2-hydroxy-4-methylpentanoate (3-isopropylmalate) to 3-carboxy-4-methyl-2-oxopentanoate. The product decarboxylates to 4-methyl-2 oxopentanoate. In Aspergillus niger, this protein is 3-isopropylmalate dehydrogenase B (leu2B).